Reading from the N-terminus, the 275-residue chain is NH(3)-dependent NAD(+) synthetase (275 aa).

Residue 46-53 (GISGGQDS) participates in ATP binding. Mg(2+) is bound at residue Asp-52. Position 140 (Arg-140) interacts with deamido-NAD(+). An ATP-binding site is contributed by Thr-160. Glu-165 provides a ligand contact to Mg(2+). Positions 173 and 180 each coordinate deamido-NAD(+). ATP is bound by residues Lys-189 and Thr-211. Position 260–261 (260–261 (HK)) interacts with deamido-NAD(+).

The protein belongs to the NAD synthetase family. As to quaternary structure, homodimer.

The enzyme catalyses deamido-NAD(+) + NH4(+) + ATP = AMP + diphosphate + NAD(+) + H(+). It participates in cofactor biosynthesis; NAD(+) biosynthesis; NAD(+) from deamido-NAD(+) (ammonia route): step 1/1. Its function is as follows. Catalyzes the ATP-dependent amidation of deamido-NAD to form NAD. Uses ammonia as a nitrogen source. This chain is NH(3)-dependent NAD(+) synthetase, found in Escherichia coli O127:H6 (strain E2348/69 / EPEC).